The sequence spans 30 residues: Dermaseptin-J10 (30 aa).

As to expression, expressed by the skin glands.

It is found in the secreted. In terms of biological role, has antimicrobial activity. The protein is Dermaseptin-J10 of Phasmahyla jandaia (Jandaia leaf frog).